Consider the following 357-residue polypeptide: Arginine kinase Scy p 2.0101 (357 aa).

The Phosphagen kinase N-terminal domain occupies 9-91 (KLEEGFKKLE…FDPIIEDYHK (83 aa)). 64–68 (GVGVY) provides a ligand contact to L-arginine. 2 igE-binding and beta-hexosaminidase release from rat basophilic leukemia (RBL) cells regions span residues 113-127 (VDPD…RVRC) and 127-155 (CGRS…VSST). Residues 119–356 (FVISTRVRCG…LELIKIEKEM (238 aa)) enclose the Phosphagen kinase C-terminal domain. Residue 122–126 (STRVR) coordinates ATP. H185 is an ATP binding site. C201 and C271 are joined by a disulfide. The interval 204 to 218 (WPTGRGIYHNDNKTF) is igE-binding and beta-hexosaminidase release from rat basophilic leukemia (RBL) cells. The igE-binding, but no beta-hexosaminidase release from rat basophilic leukemia (RBL) cells stretch occupies residues 211 to 225 (YHNDNKTFLVWCNEE). E225 provides a ligand contact to L-arginine. Residue R229 participates in ATP binding. Residue C271 coordinates L-arginine. ATP is bound by residues 280-284 (RASVH) and 309-314 (RGTRGE). E314 serves as a coordination point for L-arginine. The segment at 316 to 330 (TEAEGGVYDISNKRR) is igE-binding, but no beta-hexosaminidase release from rat basophilic leukemia (RBL) cells.

This sequence belongs to the ATP:guanido phosphotransferase family. Glycosylated. Muscle (at protein level).

The enzyme catalyses L-arginine + ATP = N(omega)-phospho-L-arginine + ADP + H(+). Functionally, catalyzes the reversible transfer of high energy ATP gamma-phosphate group to L-arginine. The polypeptide is Arginine kinase Scy p 2.0101 (Scylla paramamosain (Mud crab)).